The chain runs to 70 residues: Large ribosomal subunit protein eL43 (70 aa).

C36, C39, C55, and C58 together coordinate Zn(2+). The C4-type zinc-finger motif lies at 36 to 58 (CPYCKTTGKVIRLASGIWYCKKC).

It belongs to the eukaryotic ribosomal protein eL43 family. Putative zinc-binding subfamily. Part of the 50S ribosomal subunit. The cofactor is Zn(2+).

Binds to the 23S rRNA. This chain is Large ribosomal subunit protein eL43, found in Saccharolobus solfataricus (strain ATCC 35092 / DSM 1617 / JCM 11322 / P2) (Sulfolobus solfataricus).